Consider the following 190-residue polypeptide: Dual specificity protein phosphatase 21 (190 aa).

One can recognise a Tyrosine-protein phosphatase domain in the interval 21-162; sequence SFSQITRSLF…LINYEFKLFN (142 aa). The sufficient for mitochondrial localization stretch occupies residues 43–128; the sequence is LSSNRITAIV…AYLMKYHSMS (86 aa). Residue C106 is the Phosphocysteine intermediate of the active site.

This sequence belongs to the protein-tyrosine phosphatase family. Non-receptor class dual specificity subfamily. In terms of assembly, microtubule inner protein component of sperm flagellar doublet microtubules. Expressed in testis.

It localises to the cytoplasm. Its subcellular location is the nucleus. The protein localises to the mitochondrion inner membrane. It is found in the cytoskeleton. The protein resides in the flagellum axoneme. The catalysed reaction is O-phospho-L-tyrosyl-[protein] + H2O = L-tyrosyl-[protein] + phosphate. It carries out the reaction O-phospho-L-seryl-[protein] + H2O = L-seryl-[protein] + phosphate. It catalyses the reaction O-phospho-L-threonyl-[protein] + H2O = L-threonyl-[protein] + phosphate. In terms of biological role, protein phosphatase component of the sperm flagellar doublet microtubules. May act as a regulator of sperm motility by mediating dephosphorylation of sperm doublet microtubule proteins. Can dephosphorylate single and diphosphorylated synthetic MAPK peptides, with preference for the phosphotyrosine and diphosphorylated forms over phosphothreonine. This is Dual specificity protein phosphatase 21 (DUSP21) from Homo sapiens (Human).